Consider the following 81-residue polypeptide: Short neurotoxin 1 (81 aa).

Positions 1–21 (MKTLLLTLVVVTIVCLDLGYT) are cleaved as a signal peptide. 4 cysteine pairs are disulfide-bonded: Cys24/Cys43, Cys38/Cys60, Cys62/Cys73, and Cys74/Cys79.

Belongs to the three-finger toxin family. Short-chain subfamily. Type I alpha-neurotoxin sub-subfamily. As to expression, expressed by the venom gland.

The protein resides in the secreted. Its function is as follows. Binds to muscle nicotinic acetylcholine receptor (nAChR) and inhibit acetylcholine from binding to the receptor, thereby impairing neuromuscular transmission. This is Short neurotoxin 1 from Hoplocephalus stephensii (Stephens's banded snake).